A 102-amino-acid polypeptide reads, in one-letter code: Small ribosomal subunit protein uS10 (102 aa).

This sequence belongs to the universal ribosomal protein uS10 family. Part of the 30S ribosomal subunit.

Its function is as follows. Involved in the binding of tRNA to the ribosomes. In Staphylococcus aureus (strain Mu3 / ATCC 700698), this protein is Small ribosomal subunit protein uS10.